A 204-amino-acid chain; its full sequence is Pectinesterase inhibitor 9 (204 aa).

Residues 1 to 23 (MELKNTIFLVILLSITILQSSSA) form the signal peptide. Asn26 is a glycosylation site (N-linked (GlcNAc...) asparagine). Disulfide bonds link Cys38-Cys47 and Cys106-Cys157.

This sequence belongs to the PMEI family. As to quaternary structure, binds reversibly to PME3 to inhibit its activity; the stability of the PME3-PMEI9 complex and the inhibition of the pectin methylesterase (PME) activity is pH-dependent, based on protonation status of amino-acids at the complex interface. In terms of tissue distribution, highly expressed in roots and etiolated hypocotyls. Expressed in seedlings, leaves, stems, siliques, floral buds and mature seeds.

It localises to the secreted. The protein localises to the extracellular space. The protein resides in the apoplast. Functionally, pectin methylesterase (PME) inhibitor that probably targets root-expressed PME and PME3 in a moderate pH-dependent manner, mainly in slightly acidic conditions (pH 6.3 and 5.0) and to some extent at pH 7.5; this processus relies on changes in the protonation of amino acids involved in intermolecular and intramolecular interactions. Regulates de-methylesterification of pectins in roots and affects root growth. In Arabidopsis thaliana (Mouse-ear cress), this protein is Pectinesterase inhibitor 9.